The sequence spans 492 residues: Catalase isozyme 1 (492 aa).

Catalysis depends on residues His65 and Asn138. Residue Tyr348 coordinates heme.

This sequence belongs to the catalase family. In terms of assembly, homotetramer. Heme serves as cofactor. In whole endosperms (aleurones plus starchy endosperm), in isolated aleurones and in developing seeds.

Its subcellular location is the peroxisome. The protein localises to the glyoxysome. It carries out the reaction 2 H2O2 = O2 + 2 H2O. Occurs in almost all aerobically respiring organisms and serves to protect cells from the toxic effects of hydrogen peroxide. The sequence is that of Catalase isozyme 1 (CAT1) from Hordeum vulgare (Barley).